Consider the following 534-residue polypeptide: Glucans biosynthesis protein D (534 aa).

The segment at residues 1 to 26 (MQRRDFIRNASLALAAFGLPSLPACA) is a signal peptide (tat-type signal).

This sequence belongs to the OpgD/OpgG family. In terms of processing, predicted to be exported by the Tat system. The position of the signal peptide cleavage has not been experimentally proven.

Its subcellular location is the periplasm. It functions in the pathway glycan metabolism; osmoregulated periplasmic glucan (OPG) biosynthesis. Functionally, probably involved in the control of the structural glucose backbone of osmoregulated periplasmic glucans (OPGs). This is Glucans biosynthesis protein D from Stenotrophomonas maltophilia (strain R551-3).